Reading from the N-terminus, the 418-residue chain is Odorant receptor 13a (418 aa).

Over 1-38 (MFYSYPYKALSFPIQCVWLKLNGSWPLTESSRPWRSQS) the chain is Cytoplasmic. The chain crosses the membrane as a helical span at residues 39–59 (LLATAYIVWAWYVIASVGITI). The Extracellular segment spans residues 60–70 (SYQTAFLLNNL). Asn-69 carries N-linked (GlcNAc...) asparagine glycosylation. A helical membrane pass occupies residues 71–91 (SDIIITTENCCTTFMGVLNFV). Residues 92–140 (RLIHLRLNQRKFRQLIENFSYEIWIPNSSKNNVAAECRRRMVTFSIMTS) are Cytoplasmic-facing. Residues 141–161 (LLACLIIMYCVLPLVEIFFGP) traverse the membrane as a helical segment. Residues 162–195 (AFDAQNKPFPYKMIFPYDAQSSWIRYVMTYIFTS) lie on the Extracellular side of the membrane. The helical transmembrane segment at 196–216 (YAGICVVTTLFAEDTILGFFI) threads the bilayer. At 217 to 273 (TYTCGQFHLLHQRIAGLFAGSNAELAESIQLERLKRIVEKHNNIISFAKRLEDFFNP) the chain is on the cytoplasmic side. Residues 274 to 294 (ILLANLMISSVLICMVGFQIV) form a helical membrane-spanning segment. Topologically, residues 295-299 (TGKNM) are extracellular. The helical transmembrane segment at 300-320 (FIGDYVKFIIYISSALSQLYV) threads the bilayer. Over 321–385 (LCENGDALIK…PVRITAFKFS (65 aa)) the chain is Cytoplasmic. A helical membrane pass occupies residues 386–406 (TLSLQSFTAILSTSISYFTLL). Residues 407–418 (RSVYFDDEKKLD) are Extracellular-facing.

The protein belongs to the insect chemoreceptor superfamily. Heteromeric odorant receptor channel (TC 1.A.69) family. Or1a subfamily. In terms of assembly, interacts with Orco. Complexes exist early in the endomembrane system in olfactory sensory neurons (OSNs), coupling these complexes to the conserved ciliary trafficking pathway. Expressed in olfactory sensory neurons in the antenna.

It is found in the cell membrane. In terms of biological role, odorant receptor which mediates acceptance or avoidance behavior, depending on its substrates. The odorant receptor repertoire encodes a large collection of odor stimuli that vary widely in identity, intensity, and duration. May form a complex with Orco to form odorant-sensing units, providing sensitive and prolonged odorant signaling and calcium permeability. Involved in the behavioral responses to octanol, nonanol, and pentyl acetate. The polypeptide is Odorant receptor 13a (Or13a) (Drosophila melanogaster (Fruit fly)).